A 466-amino-acid chain; its full sequence is MPQTLSASDMVTPGSLSPPPTEPTDGEQAGQPLLDGAPSSASLETLIQHLVPTADYYPEKAYIFTFLLSSRLFIEPRELLARVCHLCIEQQQLDKPVLDKARVRKFGPKLLQLLAEWTETFPRDFQEESTIGHLKDVVGRIAPCDEAYRKRMHQLLQALHQKLAALRQGPEGLVGADKPISYRTKPPASIHRELLGVCSDPYTLAQQLTHVELERLRHIGPEEFVQAFVNKDPLASTKPCFSDKTSNLEAYVKWFNRLCYLVATEICMPAKKKQRAQVIEFFIDVARECFNIGNFNSLMAIISGMNMSPVSRLKKTWAKVRTAKFFILEHQMDPTGNFCNYRTALRGAAHRSLTAHSSREKIVIPFFSLLIKDIYFLNEGCANRLPNGHVNFEKFLELAKQVGEFITWKQVECPFEQDASITHYLYTAPIFSEDGLYLASYESESPENQTEKERWKALRSSILGKT.

Positions 1-37 (MPQTLSASDMVTPGSLSPPPTEPTDGEQAGQPLLDGA) are disordered. The N-terminal Ras-GEF domain maps to 34 to 164 (LDGAPSSASL…LLQALHQKLA (131 aa)). Residues 200–446 (DPYTLAQQLT…YLASYESESP (247 aa)) enclose the Ras-GEF domain.

Guanine nucleotide exchange factor (GEF). The sequence is that of Ras-GEF domain-containing family member 1C (RASGEF1C) from Homo sapiens (Human).